A 286-amino-acid chain; its full sequence is MASGKEIRTKIGSIKNTQKITSAMEMVAASKMRKAQDRMEVGKPYARRMREVVGHIAAGNLEYQHLYITEREVKRVGYIVVSTDRGLCGGLNVNLFKAVLRHSKEWADKGIETDFCMVGAKGTAFFKSVGANIVASLRDIGEQPSITSLIGSVKVMLDAFADGKIDRLYVCSNDFVNTMTQTPKVERLLPLKPEDGAIHKRSWDYLYEPDAKELLDGLMVRYIESQVFQAVVENGACEQAARMIAMKSATDNAGNLINELQLAYNKARQAAITQELSEIVGGAAAV.

It belongs to the ATPase gamma chain family. In terms of assembly, F-type ATPases have 2 components, CF(1) - the catalytic core - and CF(0) - the membrane proton channel. CF(1) has five subunits: alpha(3), beta(3), gamma(1), delta(1), epsilon(1). CF(0) has three main subunits: a, b and c.

It localises to the cell inner membrane. Its function is as follows. Produces ATP from ADP in the presence of a proton gradient across the membrane. The gamma chain is believed to be important in regulating ATPase activity and the flow of protons through the CF(0) complex. The sequence is that of ATP synthase gamma chain from Teredinibacter turnerae (strain ATCC 39867 / T7901).